We begin with the raw amino-acid sequence, 155 residues long: Small ribosomal subunit protein uS7cz/uS7cy (155 aa).

This sequence belongs to the universal ribosomal protein uS7 family. In terms of assembly, part of the 30S ribosomal subunit.

It localises to the plastid. The protein localises to the chloroplast. Its function is as follows. One of the primary rRNA binding proteins, it binds directly to 16S rRNA where it nucleates assembly of the head domain of the 30S subunit. The protein is Small ribosomal subunit protein uS7cz/uS7cy (rps7-A) of Cucumis sativus (Cucumber).